The chain runs to 201 residues: dTTP/UTP pyrophosphatase (201 aa).

Asp-80 acts as the Proton acceptor in catalysis.

This sequence belongs to the Maf family. YhdE subfamily. It depends on a divalent metal cation as a cofactor.

The protein localises to the cytoplasm. The enzyme catalyses dTTP + H2O = dTMP + diphosphate + H(+). It carries out the reaction UTP + H2O = UMP + diphosphate + H(+). Functionally, nucleoside triphosphate pyrophosphatase that hydrolyzes dTTP and UTP. May have a dual role in cell division arrest and in preventing the incorporation of modified nucleotides into cellular nucleic acids. This is dTTP/UTP pyrophosphatase from Novosphingobium aromaticivorans (strain ATCC 700278 / DSM 12444 / CCUG 56034 / CIP 105152 / NBRC 16084 / F199).